Reading from the N-terminus, the 3416-residue chain is Genome polyprotein (3416 aa).

The tract at residues 1 to 34 (MAKGAVLKGKGGGPPRRVPKETAKKTRQGPGRLP) is disordered. Over 1–99 (MAKGAVLKGK…NRRRGKRRST (99 aa)) the chain is Cytoplasmic. Positions 97-117 (RSTTGLLTSILLACLATLVIS) are cleaved as a propeptide — ER anchor for the capsid protein C, removed in mature form by serine protease NS3. A helical transmembrane segment spans residues 100–120 (TGLLTSILLACLATLVISATI). Over 121 to 243 (RRERTGDMVI…HLTRVEGWVW (123 aa)) the chain is Extracellular. Asparagine 145 carries an N-linked (GlcNAc...) asparagine; by host glycan. Residues 244-261 (KNKLLTMAFCAVVWMVTD) form a helical membrane-spanning segment. Serine 262 is a topological domain (cytoplasmic). A helical membrane pass occupies residues 263–281 (LPTRFIVITVALCLAPTYA). Topologically, residues 282–728 (TRCTHLQNRD…HTAFGAAFNT (447 aa)) are extracellular. Intrachain disulfides connect cysteine 284–cysteine 311, cysteine 341–cysteine 397, cysteine 341–cysteine 402, cysteine 355–cysteine 386, cysteine 373–cysteine 397, and cysteine 373–cysteine 402. The interval 379–392 (DRGWGNHCGLFGKG) is fusion peptide. Asparagine 435 carries N-linked (GlcNAc...) asparagine; by host glycosylation. 2 cysteine pairs are disulfide-bonded: cysteine 467-cysteine 571 and cysteine 588-cysteine 619. The chain crosses the membrane as a helical span at residues 729–749 (IFGGVGFLPRILLGVALAWLG). The Cytoplasmic portion of the chain corresponds to 750-756 (LNSRNPT). The chain crosses the membrane as a helical span at residues 757–777 (LSVGFLITGGLVLTMTLGVGA). The Extracellular segment spans residues 778–1134 (DMGCAIDANR…RSMVLADNGA (357 aa)). 6 disulfides stabilise this stretch: cysteine 781-cysteine 792, cysteine 832-cysteine 922, cysteine 957-cysteine 1002, cysteine 1059-cysteine 1108, cysteine 1070-cysteine 1092, and cysteine 1091-cysteine 1095. Asparagine 862, asparagine 985, and asparagine 1001 each carry an N-linked (GlcNAc...) asparagine; by host glycan. The chain crosses the membrane as a helical span at residues 1135–1155 (MLSEGGVPGIVAVFVVLELVI). The Cytoplasmic segment spans residues 1156–1162 (RRRPTTG). A helical transmembrane segment spans residues 1163–1183 (TSVVWCGVVVLGLVVTGLVTI). Residues 1184–1189 (EGLCRY) are Lumenal-facing. The helical transmembrane segment at 1190 to 1210 (VVAVGILMSMELGPEIVALVL) threads the bilayer. The Cytoplasmic segment spans residues 1211-1235 (LQAVFDMRTGLLVAFAVKRAYTTRE). Residues 1236-1256 (AVVTYFLLLVLELGFPEASLS) traverse the membrane as a helical segment. Residues 1257–1295 (NIWKWADSLAMGTLILQACSQEGRARVGYLLAAMMTQKD) are Lumenal-facing. A helical membrane pass occupies residues 1296-1316 (MAIIHTGLTIFLSAATAMAVW). Residues 1317-1361 (SMIKGQRDQKGLSWATPLVGLFGGEGVGLRLLAFRRLAERRNRRS) lie on the Cytoplasmic side of the membrane. The chain crosses the membrane as a helical span at residues 1362–1379 (FSEPLTVVGVMLTVASGM). Residues 1380 to 1384 (VRHTS) are Lumenal-facing. The helical transmembrane segment at 1385–1405 (QEALCALVAGAFLLLMMVLGT) threads the bilayer. At 1406–1458 (RKMQLIAEWCGEVEWNPDLVNEGGEVNLKVRQDAMGNLHLTEVEKEERAMALW) the chain is on the cytoplasmic side. Residues 1412 to 1451 (AEWCGEVEWNPDLVNEGGEVNLKVRQDAMGNLHLTEVEKE) are interacts with and activates NS3 protease. An intramembrane region (helical) is located at residues 1459 to 1479 (LLAGLVASAFHWAGILIVLAI). Topologically, residues 1480-2162 (WTFFEMLSSG…RMAERDAPEA (683 aa)) are cytoplasmic. The 180-residue stretch at 1492–1671 (SELVFSGQGT…EAEKSRPELP (180 aa)) folds into the Peptidase S7 domain. Catalysis depends on charge relay system; for serine protease NS3 activity residues histidine 1545, aspartate 1569, and serine 1629. Positions 1677-1833 (TGWMSKGQIT…ESNGAIMSEE (157 aa)) constitute a Helicase ATP-binding domain. 1690–1697 (MHPGSGKT) is an ATP binding site. The DEAH box signature appears at 1781-1784 (DEAH). One can recognise a Helicase C-terminal domain in the interval 1844–2002 (GFDWITEYEG…TLRGPVATFY (159 aa)). Position 1885 is an N6-acetyllysine; by host (lysine 1885). A helical membrane pass occupies residues 2163–2183 (FLTIVEVAVLGVATLGILWCF). Residues 2184 to 2191 (VARTSVSR) lie on the Lumenal side of the membrane. The segment at residues 2192–2211 (MFLGTVVLFAALLLLWIGGV) is an intramembrane region (helical). Position 2212 (aspartate 2212) is a topological domain, lumenal. Residues 2213-2233 (YGYMAGIALIFYIFLTVLQPE) form a helical membrane-spanning segment. Topologically, residues 2234–2246 (PGKQRSSDDNRLA) are cytoplasmic. The helical transmembrane segment at 2247 to 2267 (YFLLGLLSLAGLVTANEMGML) threads the bilayer. The Lumenal segment spans residues 2268–2301 (DKTKADLAGLMWHGEQRHPAWEEWTNVDIQPARS). An intramembrane region (helical) is located at residues 2302-2322 (WGTYVLIVSLFTPYMLHQLQT). At 2323-2345 (KIQQLVNSSVASGAQAMRDLGGG) the chain is on the lumenal side. The segment at residues 2346–2366 (TPFFGVAGHVIALGVTSLVGA) is an intramembrane region (helical). Residues 2367–2368 (TP) lie on the Lumenal side of the membrane. A helical membrane pass occupies residues 2369 to 2389 (LSLGLGVALAAFHLAIVASGL). Topologically, residues 2390 to 2432 (EAELTQRAHRVFFSAMVKNPMVDGDVINPFPDGEPKPVLYERR) are cytoplasmic. The chain crosses the membrane as a helical span at residues 2433 to 2453 (MSLILAIALCMVSVVLNRTAA). Residues 2454–2476 (SMTEAGAVGLAALGQLVHPETET) lie on the Lumenal side of the membrane. Residues 2477–2497 (LWTMPMACGMAGLVRGSFWGL) traverse the membrane as a helical segment. Residues 2498–3416 (LPMGHRLWLK…WDLKLESNII (919 aa)) lie on the Cytoplasmic side of the membrane. The 265-residue stretch at 2514-2778 (GGADGETLGD…EVDLGTGTRC (265 aa)) folds into the mRNA cap 0-1 NS5-type MT domain. Residue serine 2569 participates in S-adenosyl-L-methionine binding. A Phosphoserine modification is found at serine 2569. Lysine 2574 acts as the For 2'-O-MTase activity in catalysis. Residues glycine 2599, tryptophan 2600, threonine 2617, isoleucine 2618, aspartate 2644, and valine 2645 each coordinate S-adenosyl-L-methionine. Catalysis depends on aspartate 2659, which acts as the For 2'-O-MTase activity. Isoleucine 2660 provides a ligand contact to S-adenosyl-L-methionine. Catalysis depends on for 2'-O-MTase activity residues lysine 2696 and glutamate 2732. Positions 2732–2736 (EMYFS) are interaction with host SCRIB. S-adenosyl-L-methionine is bound at residue tyrosine 2734. Zn(2+) contacts are provided by glutamate 2952, histidine 2956, cysteine 2961, and cysteine 2964. Residues 3042–3191 (GLFYADDTAG…RPIDDRFGKA (150 aa)) form the RdRp catalytic domain. Histidine 3226, cysteine 3242, and cysteine 3361 together coordinate Zn(2+).

The protein in the N-terminal section; belongs to the class I-like SAM-binding methyltransferase superfamily. mRNA cap 0-1 NS5-type methyltransferase family. Homodimer. Interacts (via N-terminus) with host EXOC1 (via C-terminus); this interaction results in EXOC1 degradation through the proteasome degradation pathway. As to quaternary structure, forms heterodimers with envelope protein E in the endoplasmic reticulum and Golgi. In terms of assembly, homodimer; in the endoplasmic reticulum and Golgi. Interacts with protein prM. Interacts with non-structural protein 1. Homodimer; Homohexamer when secreted. Interacts with envelope protein E. As to quaternary structure, interacts (via N-terminus) with serine protease NS3. In terms of assembly, forms a heterodimer with serine protease NS3. May form homooligomers. Forms a heterodimer with NS2B. Interacts with NS4B. Interacts with unphosphorylated RNA-directed RNA polymerase NS5; this interaction stimulates RNA-directed RNA polymerase NS5 guanylyltransferase activity. As to quaternary structure, interacts with serine protease NS3. In terms of assembly, homodimer. Interacts with host STAT2; this interaction inhibits the phosphorylation of the latter, and, when all viral proteins are present (polyprotein), targets STAT2 for degradation. Interacts with serine protease NS3. Specific enzymatic cleavages in vivo yield mature proteins. Cleavages in the lumen of endoplasmic reticulum are performed by host signal peptidase, whereas cleavages in the cytoplasmic side are performed by serine protease NS3. Signal cleavage at the 2K-4B site requires a prior NS3 protease-mediated cleavage at the 4A-2K site. In terms of processing, cleaved in post-Golgi vesicles by a host furin, releasing the mature small envelope protein M, and peptide pr. This cleavage is incomplete as up to 30% of viral particles still carry uncleaved prM. Post-translationally, N-glycosylated. N-glycosylated. The excreted form is glycosylated and this is required for efficient secretion of the protein from infected cells. In terms of processing, acetylated by host KAT5. Acetylation modulates NS3 RNA-binding and unwinding activities and plays an important positive role for viral replication. Post-translationally, phosphorylated on serines residues. This phosphorylation may trigger NS5 nuclear localization.

Its subcellular location is the virion. It localises to the host nucleus. The protein resides in the host cytoplasm. The protein localises to the host perinuclear region. It is found in the secreted. Its subcellular location is the virion membrane. It localises to the host endoplasmic reticulum membrane. It carries out the reaction Selective hydrolysis of -Xaa-Xaa-|-Yaa- bonds in which each of the Xaa can be either Arg or Lys and Yaa can be either Ser or Ala.. The enzyme catalyses RNA(n) + a ribonucleoside 5'-triphosphate = RNA(n+1) + diphosphate. The catalysed reaction is a ribonucleoside 5'-triphosphate + H2O = a ribonucleoside 5'-diphosphate + phosphate + H(+). It catalyses the reaction ATP + H2O = ADP + phosphate + H(+). It carries out the reaction a 5'-end (5'-triphosphoguanosine)-ribonucleoside in mRNA + S-adenosyl-L-methionine = a 5'-end (N(7)-methyl 5'-triphosphoguanosine)-ribonucleoside in mRNA + S-adenosyl-L-homocysteine. The enzyme catalyses a 5'-end (N(7)-methyl 5'-triphosphoguanosine)-ribonucleoside in mRNA + S-adenosyl-L-methionine = a 5'-end (N(7)-methyl 5'-triphosphoguanosine)-(2'-O-methyl-ribonucleoside) in mRNA + S-adenosyl-L-homocysteine + H(+). Its function is as follows. Plays a role in virus budding by binding to the cell membrane and gathering the viral RNA into a nucleocapsid that forms the core of a mature virus particle. During virus entry, may induce genome penetration into the host cytoplasm after hemifusion induced by the surface proteins. Can migrate to the cell nucleus where it modulates host functions. In terms of biological role, inhibits RNA silencing by interfering with host Dicer. Functionally, prevents premature fusion activity of envelope proteins in trans-Golgi by binding to envelope protein E at pH6.0. After virion release in extracellular space, gets dissociated from E dimers. Acts as a chaperone for envelope protein E during intracellular virion assembly by masking and inactivating envelope protein E fusion peptide. prM is the only viral peptide matured by host furin in the trans-Golgi network probably to avoid catastrophic activation of the viral fusion activity in acidic Golgi compartment prior to virion release. prM-E cleavage is inefficient, and many virions are only partially matured. These uncleaved prM would play a role in immune evasion. Its function is as follows. May play a role in virus budding. Exerts cytotoxic effects by activating a mitochondrial apoptotic pathway through M ectodomain. May display a viroporin activity. In terms of biological role, binds to host cell surface receptor and mediates fusion between viral and cellular membranes. Envelope protein is synthesized in the endoplasmic reticulum in the form of heterodimer with protein prM. They play a role in virion budding in the ER, and the newly formed immature particle is covered with 60 spikes composed of heterodimer between precursor prM and envelope protein E. The virion is transported to the Golgi apparatus where the low pH causes dissociation of PrM-E heterodimers and formation of E homodimers. prM-E cleavage is inefficient, and many virions are only partially matured. These uncleaved prM would play a role in immune evasion. Functionally, involved in immune evasion, pathogenesis and viral replication. Once cleaved off the polyprotein, is targeted to three destinations: the viral replication cycle, the plasma membrane and the extracellular compartment. Essential for viral replication. Required for formation of the replication complex and recruitment of other non-structural proteins to the ER-derived membrane structures. Excreted as a hexameric lipoparticle that plays a role against host immune response. Antagonizing the complement function. Binds to the host macrophages and dendritic cells. Inhibits signal transduction originating from Toll-like receptor 3 (TLR3). Component of the viral RNA replication complex that functions in virion assembly and antagonizes the host immune response. Its function is as follows. Required cofactor for the serine protease function of NS3. May have membrane-destabilizing activity and form viroporins. In terms of biological role, displays three enzymatic activities: serine protease, NTPase and RNA helicase. NS3 serine protease, in association with NS2B, performs its autocleavage and cleaves the polyprotein at dibasic sites in the cytoplasm: C-prM, NS2A-NS2B, NS2B-NS3, NS3-NS4A, NS4A-2K and NS4B-NS5. NS3 RNA helicase binds RNA and unwinds dsRNA in the 3' to 5' direction. Functionally, regulates the ATPase activity of the NS3 helicase activity. NS4A allows NS3 helicase to conserve energy during unwinding. Functions as a signal peptide for NS4B and is required for the interferon antagonism activity of the latter. Its function is as follows. Induces the formation of ER-derived membrane vesicles where the viral replication takes place. Inhibits interferon (IFN)-induced host STAT1 phosphorylation and nuclear translocation, thereby preventing the establishment of cellular antiviral state by blocking the IFN-alpha/beta pathway. Inhibits STAT2 translocation in the nucleus after IFN-alpha treatment. In terms of biological role, replicates the viral (+) and (-) RNA genome, and performs the capping of genomes in the cytoplasm. NS5 methylates viral RNA cap at guanine N-7 and ribose 2'-O positions. Besides its role in RNA genome replication, also prevents the establishment of cellular antiviral state by blocking the interferon-alpha/beta (IFN-alpha/beta) signaling pathway. Inhibits host TYK2 and STAT2 phosphorylation, thereby preventing activation of JAK-STAT signaling pathway. In Homo sapiens (Human), this protein is Genome polyprotein.